A 508-amino-acid chain; its full sequence is Light-independent protochlorophyllide reductase subunit B (508 aa).

Asp-36 provides a ligand contact to [4Fe-4S] cluster. Catalysis depends on Asp-294, which acts as the Proton donor. Position 429-430 (429-430 (GM)) interacts with substrate.

It belongs to the ChlB/BchB/BchZ family. In terms of assembly, protochlorophyllide reductase is composed of three subunits; ChlL, ChlN and ChlB. Forms a heterotetramer of two ChlB and two ChlN subunits. [4Fe-4S] cluster is required as a cofactor.

The enzyme catalyses chlorophyllide a + oxidized 2[4Fe-4S]-[ferredoxin] + 2 ADP + 2 phosphate = protochlorophyllide a + reduced 2[4Fe-4S]-[ferredoxin] + 2 ATP + 2 H2O. It functions in the pathway porphyrin-containing compound metabolism; chlorophyll biosynthesis (light-independent). Functionally, component of the dark-operative protochlorophyllide reductase (DPOR) that uses Mg-ATP and reduced ferredoxin to reduce ring D of protochlorophyllide (Pchlide) to form chlorophyllide a (Chlide). This reaction is light-independent. The NB-protein (ChlN-ChlB) is the catalytic component of the complex. The chain is Light-independent protochlorophyllide reductase subunit B from Synechococcus elongatus (strain ATCC 33912 / PCC 7942 / FACHB-805) (Anacystis nidulans R2).